The following is a 78-amino-acid chain: Small ribosomal subunit protein bS20 (78 aa).

The segment at 1–34 (MANIKSNLKRNKQNRARHTVVHSQTSAVKTQIKK) is disordered. Basic residues predominate over residues 7–20 (NLKRNKQNRARHTV). The segment covering 21-34 (VHSQTSAVKTQIKK) has biased composition (polar residues).

Belongs to the bacterial ribosomal protein bS20 family.

Its function is as follows. Binds directly to 16S ribosomal RNA. The sequence is that of Small ribosomal subunit protein bS20 from Malacoplasma penetrans (strain HF-2) (Mycoplasma penetrans).